A 445-amino-acid chain; its full sequence is StAR-related lipid transfer protein 3 (445 aa).

Residues 1–51 (MSKLPRELTRDLERSLPAVASLGSSLSHSQSLSSHLLPPPEKRRAISDVRR) lie on the Cytoplasmic side of the membrane. In terms of domain architecture, MENTAL spans 46-217 (ISDVRRTFCL…YSPPESFAGS (172 aa)). Residues 52-72 (TFCLFVTFDLLFISLLWIIEL) traverse the membrane as a helical segment. The Extracellular segment spans residues 73 to 94 (NTNTGIRKNLEQEIIQYNFKTS). The chain crosses the membrane as a helical span at residues 95-115 (FFDIFVLAFFRFSGLLLGYAV). The Cytoplasmic segment spans residues 116–120 (LRLRH). Residues 121 to 141 (WWVIAVTTLVSSAFLIVKVIL) traverse the membrane as a helical segment. The Extracellular portion of the chain corresponds to 142–148 (SELLSKG). Residues 149–169 (AFGYLLPIVSFVLAWLETWFL) traverse the membrane as a helical segment. Over 170-445 (DFKVLPQEAE…QRISELGARA (276 aa)) the chain is Cytoplasmic. Positions 206-212 (QFYSPPE) match the FFAT motif. The residue at position 209 (Ser-209) is a Phosphoserine. The region spanning 230-443 (SFSAQEREYI…LRQRISELGA (214 aa)) is the START domain.

The protein belongs to the STARD3 family. As to quaternary structure, homodimer. Interacts (via the MENTAL domain) with STARD3NL. Interacts (via phosphorylated FFAT motif) with VAPA (via MSP domain). Interacts (via phosphorylated FFAT motif) with VAPB (via MSP domain). Interacts (via phosphorylated FFAT motif) with MOSPD2 (via MSP domain); this interaction allows enrichment of MOSPD2 around endosomes. Phosphorylation at Ser-209 is necessary and sufficient for the direct interaction of the phosphorylated FFAT motif with the MSP domain of MOSPD2, VAPA and VAPB and allows the tethering of two membranes that participates in the formation of ER-endosome contacts. Phosphorylation of the FFAT motif leads to conformation changes. Additional phosphorylations around the core FFAT motif (QFYSPPE) are not essential but strengthen the interaction with MOSPD2, VAPA and VAPB. Phosphorylation at Ser-209 of FFAT motif drives membrane tethering between the endoplasmic reticulum and late endosomes via interaction with VAPA and VAPB that in turn allows the efficient transport of sterol mediated by the START domain. Expressed in retina.

The protein localises to the late endosome membrane. It catalyses the reaction cholesterol(in) = cholesterol(out). Functionally, sterol-binding protein that mediates cholesterol transport from the endoplasmic reticulum to endosomes. The sterol transport mechanism is triggered by phosphorylation of FFAT motif that leads to membrane tethering between the endoplasmic reticulum and late endosomes via interaction with VAPA and VAPB. Acts as a lipid transfer protein that redirects sterol to the endosome at the expense of the cell membrane and favors membrane formation inside endosomes. May also mediate cholesterol transport between other membranes, such as mitochondria membrane or cell membrane. However, such results need additional experimental evidences; probably mainly mediates cholesterol transport from the endoplasmic reticulum to endosomes. Does not activate transcriptional cholesterol sensing. Able to bind other lipids, such as lutein, a xanthophyll carotenoids that form the macular pigment of the retina. The protein is StAR-related lipid transfer protein 3 of Homo sapiens (Human).